A 447-amino-acid chain; its full sequence is Cobyrinate a,c-diamide synthase (447 aa).

The region spanning 252 to 439 is the GATase cobBQ-type domain; that stretch reads KIAVAFDESF…AHQHCIGNPY (188 aa). The active-site Nucleophile is cysteine 331.

Belongs to the CobB/CbiA family. The cofactor is Mg(2+).

The enzyme catalyses cob(II)yrinate + 2 L-glutamine + 2 ATP + 2 H2O = cob(II)yrinate a,c diamide + 2 L-glutamate + 2 ADP + 2 phosphate + 2 H(+). It catalyses the reaction Ni-sirohydrochlorin + 2 L-glutamine + 2 ATP + 2 H2O = Ni-sirohydrochlorin a,c-diamide + 2 L-glutamate + 2 ADP + 2 phosphate + 2 H(+). Its pathway is cofactor biosynthesis; adenosylcobalamin biosynthesis; cob(II)yrinate a,c-diamide from sirohydrochlorin (anaerobic route): step 10/10. Its function is as follows. Catalyzes the ATP-dependent amidation of the two carboxylate groups at positions a and c of cobyrinate, using either L-glutamine or ammonia as the nitrogen source. Involved in the biosynthesis of the unique nickel-containing tetrapyrrole coenzyme F430, the prosthetic group of methyl-coenzyme M reductase (MCR), which plays a key role in methanogenesis and anaerobic methane oxidation. Catalyzes the ATP-dependent amidation of the two carboxylate groups at positions a and c of Ni-sirohydrochlorin, using L-glutamine or ammonia as the nitrogen source. The sequence is that of Cobyrinate a,c-diamide synthase from Methanococcus maripaludis (strain C7 / ATCC BAA-1331).